The sequence spans 119 residues: Large ribosomal subunit protein uL18 (119 aa).

This sequence belongs to the universal ribosomal protein uL18 family. Part of the 50S ribosomal subunit; part of the 5S rRNA/L5/L18/L25 subcomplex. Contacts the 5S and 23S rRNAs.

Functionally, this is one of the proteins that bind and probably mediate the attachment of the 5S RNA into the large ribosomal subunit, where it forms part of the central protuberance. The protein is Large ribosomal subunit protein uL18 of Jannaschia sp. (strain CCS1).